Consider the following 205-residue polypeptide: Cytochrome c oxidase subunit 3 (205 aa).

The next 5 membrane-spanning stretches (helical) occupy residues 29–49 (TIVF…MYFV), 73–93 (LAIT…VFAA), 104–124 (WFLI…YEYF), 144–164 (ITTG…VVVL), and 184–204 (SYYW…IYFI).

It belongs to the cytochrome c oxidase subunit 3 family. Associates with subunits I, II and IV to form cytochrome c oxidase.

The protein localises to the cell membrane. It catalyses the reaction 4 Fe(II)-[cytochrome c] + O2 + 8 H(+)(in) = 4 Fe(III)-[cytochrome c] + 2 H2O + 4 H(+)(out). The protein is Cytochrome c oxidase subunit 3 (ctaE) of Corynebacterium efficiens (strain DSM 44549 / YS-314 / AJ 12310 / JCM 11189 / NBRC 100395).